Here is a 155-residue protein sequence, read N- to C-terminus: 6,7-dimethyl-8-ribityllumazine synthase (155 aa).

5-amino-6-(D-ribitylamino)uracil is bound by residues W23, A57–E59, and C81–I83. Position 86–87 (D86–T87) interacts with (2S)-2-hydroxy-3-oxobutyl phosphate. The active-site Proton donor is the H89. N114 provides a ligand contact to 5-amino-6-(D-ribitylamino)uracil. (2S)-2-hydroxy-3-oxobutyl phosphate is bound at residue R128.

Belongs to the DMRL synthase family. Forms an icosahedral capsid composed of 60 subunits, arranged as a dodecamer of pentamers.

It catalyses the reaction (2S)-2-hydroxy-3-oxobutyl phosphate + 5-amino-6-(D-ribitylamino)uracil = 6,7-dimethyl-8-(1-D-ribityl)lumazine + phosphate + 2 H2O + H(+). The protein operates within cofactor biosynthesis; riboflavin biosynthesis; riboflavin from 2-hydroxy-3-oxobutyl phosphate and 5-amino-6-(D-ribitylamino)uracil: step 1/2. Its function is as follows. Catalyzes the formation of 6,7-dimethyl-8-ribityllumazine by condensation of 5-amino-6-(D-ribitylamino)uracil with 3,4-dihydroxy-2-butanone 4-phosphate. This is the penultimate step in the biosynthesis of riboflavin. The chain is 6,7-dimethyl-8-ribityllumazine synthase from Stenotrophomonas maltophilia (strain R551-3).